We begin with the raw amino-acid sequence, 497 residues long: Probable cytosol aminopeptidase (497 aa).

Lys-267 and Asp-272 together coordinate Mn(2+). The active site involves Lys-279. 3 residues coordinate Mn(2+): Asp-290, Asp-349, and Glu-351. The active site involves Arg-353.

The protein belongs to the peptidase M17 family. Requires Mn(2+) as cofactor.

Its subcellular location is the cytoplasm. The enzyme catalyses Release of an N-terminal amino acid, Xaa-|-Yaa-, in which Xaa is preferably Leu, but may be other amino acids including Pro although not Arg or Lys, and Yaa may be Pro. Amino acid amides and methyl esters are also readily hydrolyzed, but rates on arylamides are exceedingly low.. It catalyses the reaction Release of an N-terminal amino acid, preferentially leucine, but not glutamic or aspartic acids.. In terms of biological role, presumably involved in the processing and regular turnover of intracellular proteins. Catalyzes the removal of unsubstituted N-terminal amino acids from various peptides. This Nitrosomonas eutropha (strain DSM 101675 / C91 / Nm57) protein is Probable cytosol aminopeptidase.